Here is a 157-residue protein sequence, read N- to C-terminus: Major allergen Alt a 1 (157 aa).

The signal sequence occupies residues Met1–Ala18. One can recognise an AA1-like domain in the interval Glu35–Leu153. 2 cysteine pairs are disulfide-bonded: Cys74/Cys89 and Cys128/Cys140.

It belongs to the ALTA1 family. Homodimer; disulfide-linked.

Its subcellular location is the spore wall. The protein resides in the secreted. Functionally, may bind and inhibit the beta-glucanase activity of host plant thaumatin-like proteins. This is Major allergen Alt a 1 (ALTA1) from Alternaria alternata (Alternaria rot fungus).